The primary structure comprises 338 residues: Ketol-acid reductoisomerase (NADP(+)) (338 aa).

Residues 1-181 (MKVFYDKDAD…GGGRAGIIET (181 aa)) enclose the KARI N-terminal Rossmann domain. NADP(+) contacts are provided by residues 24–27 (YGSQ), arginine 47, and serine 52. Residue histidine 107 is part of the active site. NADP(+) is bound at residue glycine 133. A KARI C-terminal knotted domain is found at 182 to 327 (NFREETETDL…EKLRAMMPWI (146 aa)). Positions 190, 194, 226, and 230 each coordinate Mg(2+). Residue serine 251 participates in substrate binding.

It belongs to the ketol-acid reductoisomerase family. The cofactor is Mg(2+).

It catalyses the reaction (2R)-2,3-dihydroxy-3-methylbutanoate + NADP(+) = (2S)-2-acetolactate + NADPH + H(+). It carries out the reaction (2R,3R)-2,3-dihydroxy-3-methylpentanoate + NADP(+) = (S)-2-ethyl-2-hydroxy-3-oxobutanoate + NADPH + H(+). Its pathway is amino-acid biosynthesis; L-isoleucine biosynthesis; L-isoleucine from 2-oxobutanoate: step 2/4. It participates in amino-acid biosynthesis; L-valine biosynthesis; L-valine from pyruvate: step 2/4. Its function is as follows. Involved in the biosynthesis of branched-chain amino acids (BCAA). Catalyzes an alkyl-migration followed by a ketol-acid reduction of (S)-2-acetolactate (S2AL) to yield (R)-2,3-dihydroxy-isovalerate. In the isomerase reaction, S2AL is rearranged via a Mg-dependent methyl migration to produce 3-hydroxy-3-methyl-2-ketobutyrate (HMKB). In the reductase reaction, this 2-ketoacid undergoes a metal-dependent reduction by NADPH to yield (R)-2,3-dihydroxy-isovalerate. This Cupriavidus pinatubonensis (strain JMP 134 / LMG 1197) (Cupriavidus necator (strain JMP 134)) protein is Ketol-acid reductoisomerase (NADP(+)).